Consider the following 120-residue polypeptide: NAD(P)H-quinone oxidoreductase subunit 3 (120 aa).

Helical transmembrane passes span 6-26 (GYDA…LALV), 64-84 (MFAL…PWAV), and 89-109 (LGLL…VALA).

This sequence belongs to the complex I subunit 3 family. As to quaternary structure, NDH-1 can be composed of about 15 different subunits; different subcomplexes with different compositions have been identified which probably have different functions.

It is found in the cellular thylakoid membrane. It catalyses the reaction a plastoquinone + NADH + (n+1) H(+)(in) = a plastoquinol + NAD(+) + n H(+)(out). The enzyme catalyses a plastoquinone + NADPH + (n+1) H(+)(in) = a plastoquinol + NADP(+) + n H(+)(out). Functionally, NDH-1 shuttles electrons from an unknown electron donor, via FMN and iron-sulfur (Fe-S) centers, to quinones in the respiratory and/or the photosynthetic chain. The immediate electron acceptor for the enzyme in this species is believed to be plastoquinone. Couples the redox reaction to proton translocation, and thus conserves the redox energy in a proton gradient. Cyanobacterial NDH-1 also plays a role in inorganic carbon-concentration. In Prochlorococcus marinus (strain MIT 9313), this protein is NAD(P)H-quinone oxidoreductase subunit 3.